The primary structure comprises 178 residues: Ribosome maturation factor RimM (178 aa).

The region spanning 101 to 178 (ADEYYWYQLV…VMRVEWDADF (78 aa)) is the PRC barrel domain.

This sequence belongs to the RimM family. In terms of assembly, binds ribosomal protein uS19.

Its subcellular location is the cytoplasm. An accessory protein needed during the final step in the assembly of 30S ribosomal subunit, possibly for assembly of the head region. Essential for efficient processing of 16S rRNA. May be needed both before and after RbfA during the maturation of 16S rRNA. It has affinity for free ribosomal 30S subunits but not for 70S ribosomes. The polypeptide is Ribosome maturation factor RimM (Pseudomonas putida (strain ATCC 47054 / DSM 6125 / CFBP 8728 / NCIMB 11950 / KT2440)).